The chain runs to 456 residues: Bifunctional protein GlmU (456 aa).

The tract at residues 1–229 (MLNNAMSVVI…LSEVEGVNNR (229 aa)) is pyrophosphorylase. Residues 11–14 (LAAG), Lys25, Gln76, 81–82 (GT), 103–105 (YGD), Gly140, Glu154, Asn169, and Asn227 each bind UDP-N-acetyl-alpha-D-glucosamine. Mg(2+) is bound at residue Asp105. Asn227 provides a ligand contact to Mg(2+). A linker region spans residues 230–250 (LQLSRLERVYQSEQAEKLLLA). Residues 251–456 (GVMLRDPARF…EGWRRPVKKK (206 aa)) are N-acetyltransferase. Arg333 and Lys351 together coordinate UDP-N-acetyl-alpha-D-glucosamine. His363 serves as the catalytic Proton acceptor. UDP-N-acetyl-alpha-D-glucosamine-binding residues include Tyr366 and Asn377. Acetyl-CoA is bound by residues Ala380, 386–387 (NY), Ser405, Ala423, and Arg440.

This sequence in the N-terminal section; belongs to the N-acetylglucosamine-1-phosphate uridyltransferase family. The protein in the C-terminal section; belongs to the transferase hexapeptide repeat family. As to quaternary structure, homotrimer. It depends on Mg(2+) as a cofactor.

It localises to the cytoplasm. It carries out the reaction alpha-D-glucosamine 1-phosphate + acetyl-CoA = N-acetyl-alpha-D-glucosamine 1-phosphate + CoA + H(+). The enzyme catalyses N-acetyl-alpha-D-glucosamine 1-phosphate + UTP + H(+) = UDP-N-acetyl-alpha-D-glucosamine + diphosphate. The protein operates within nucleotide-sugar biosynthesis; UDP-N-acetyl-alpha-D-glucosamine biosynthesis; N-acetyl-alpha-D-glucosamine 1-phosphate from alpha-D-glucosamine 6-phosphate (route II): step 2/2. It participates in nucleotide-sugar biosynthesis; UDP-N-acetyl-alpha-D-glucosamine biosynthesis; UDP-N-acetyl-alpha-D-glucosamine from N-acetyl-alpha-D-glucosamine 1-phosphate: step 1/1. It functions in the pathway bacterial outer membrane biogenesis; LPS lipid A biosynthesis. In terms of biological role, catalyzes the last two sequential reactions in the de novo biosynthetic pathway for UDP-N-acetylglucosamine (UDP-GlcNAc). The C-terminal domain catalyzes the transfer of acetyl group from acetyl coenzyme A to glucosamine-1-phosphate (GlcN-1-P) to produce N-acetylglucosamine-1-phosphate (GlcNAc-1-P), which is converted into UDP-GlcNAc by the transfer of uridine 5-monophosphate (from uridine 5-triphosphate), a reaction catalyzed by the N-terminal domain. The protein is Bifunctional protein GlmU of Shigella sonnei (strain Ss046).